Reading from the N-terminus, the 456-residue chain is Argininosuccinate lyase (456 aa).

This sequence belongs to the lyase 1 family. Argininosuccinate lyase subfamily.

Its subcellular location is the cytoplasm. It carries out the reaction 2-(N(omega)-L-arginino)succinate = fumarate + L-arginine. Its pathway is amino-acid biosynthesis; L-arginine biosynthesis; L-arginine from L-ornithine and carbamoyl phosphate: step 3/3. This is Argininosuccinate lyase from Listeria monocytogenes serotype 4b (strain CLIP80459).